Consider the following 492-residue polypeptide: Ethanolamine-phosphate phospho-lyase (492 aa).

An N6-(pyridoxal phosphate)lysine modification is found at Lys-280. Residues 462 to 492 (ASDENGLVHPSNGNSHKHTSTIPLSKKTKRN) are disordered.

It belongs to the class-III pyridoxal-phosphate-dependent aminotransferase family. Homotetramer. It depends on pyridoxal 5'-phosphate as a cofactor.

It localises to the mitochondrion. It catalyses the reaction phosphoethanolamine + H2O = acetaldehyde + NH4(+) + phosphate. Catalyzes the pyridoxal-phosphate-dependent breakdown of phosphoethanolamine, converting it to ammonia, inorganic phosphate and acetaldehyde. The chain is Ethanolamine-phosphate phospho-lyase (etnppl) from Danio rerio (Zebrafish).